The chain runs to 384 residues: tRNA-specific 2-thiouridylase MnmA (384 aa).

Residues 9–16 and Met35 contribute to the ATP site; that span reads GMSGGVDS. Positions 95–97 are interaction with target base in tRNA; sequence NPD. Residue Cys100 is the Nucleophile of the active site. An intrachain disulfide couples Cys100 to Cys196. Gly124 lines the ATP pocket. The tract at residues 146–148 is interaction with tRNA; the sequence is KDQ. The active-site Cysteine persulfide intermediate is Cys196. The segment at 308 to 309 is interaction with tRNA; the sequence is RY.

This sequence belongs to the MnmA/TRMU family.

It localises to the cytoplasm. It catalyses the reaction S-sulfanyl-L-cysteinyl-[protein] + uridine(34) in tRNA + AH2 + ATP = 2-thiouridine(34) in tRNA + L-cysteinyl-[protein] + A + AMP + diphosphate + H(+). Its function is as follows. Catalyzes the 2-thiolation of uridine at the wobble position (U34) of tRNA, leading to the formation of s(2)U34. The protein is tRNA-specific 2-thiouridylase MnmA of Burkholderia vietnamiensis (strain G4 / LMG 22486) (Burkholderia cepacia (strain R1808)).